Here is a 213-residue protein sequence, read N- to C-terminus: Thiamine-phosphate synthase (213 aa).

4-amino-2-methyl-5-(diphosphooxymethyl)pyrimidine-binding positions include 43–47 (QLRDK) and N74. Positions 75 and 94 each coordinate Mg(2+). S113 contributes to the 4-amino-2-methyl-5-(diphosphooxymethyl)pyrimidine binding site. Residue 142–144 (TAT) participates in 2-[(2R,5Z)-2-carboxy-4-methylthiazol-5(2H)-ylidene]ethyl phosphate binding. 4-amino-2-methyl-5-(diphosphooxymethyl)pyrimidine is bound at residue K145. Residues G173 and 193-194 (VS) contribute to the 2-[(2R,5Z)-2-carboxy-4-methylthiazol-5(2H)-ylidene]ethyl phosphate site.

The protein belongs to the thiamine-phosphate synthase family. Mg(2+) is required as a cofactor.

It carries out the reaction 2-[(2R,5Z)-2-carboxy-4-methylthiazol-5(2H)-ylidene]ethyl phosphate + 4-amino-2-methyl-5-(diphosphooxymethyl)pyrimidine + 2 H(+) = thiamine phosphate + CO2 + diphosphate. The enzyme catalyses 2-(2-carboxy-4-methylthiazol-5-yl)ethyl phosphate + 4-amino-2-methyl-5-(diphosphooxymethyl)pyrimidine + 2 H(+) = thiamine phosphate + CO2 + diphosphate. It catalyses the reaction 4-methyl-5-(2-phosphooxyethyl)-thiazole + 4-amino-2-methyl-5-(diphosphooxymethyl)pyrimidine + H(+) = thiamine phosphate + diphosphate. Its pathway is cofactor biosynthesis; thiamine diphosphate biosynthesis; thiamine phosphate from 4-amino-2-methyl-5-diphosphomethylpyrimidine and 4-methyl-5-(2-phosphoethyl)-thiazole: step 1/1. Condenses 4-methyl-5-(beta-hydroxyethyl)thiazole monophosphate (THZ-P) and 2-methyl-4-amino-5-hydroxymethyl pyrimidine pyrophosphate (HMP-PP) to form thiamine monophosphate (TMP). The sequence is that of Thiamine-phosphate synthase from Psychrobacter sp. (strain PRwf-1).